We begin with the raw amino-acid sequence, 151 residues long: Nucleoside diphosphate kinase (151 aa).

ATP contacts are provided by Lys-11, Phe-59, Arg-87, Thr-93, Arg-104, and Asn-114. Catalysis depends on His-117, which acts as the Pros-phosphohistidine intermediate.

The protein belongs to the NDK family. In terms of assembly, homotetramer. Mg(2+) serves as cofactor.

It is found in the cytoplasm. It catalyses the reaction a 2'-deoxyribonucleoside 5'-diphosphate + ATP = a 2'-deoxyribonucleoside 5'-triphosphate + ADP. The catalysed reaction is a ribonucleoside 5'-diphosphate + ATP = a ribonucleoside 5'-triphosphate + ADP. In terms of biological role, major role in the synthesis of nucleoside triphosphates other than ATP. The ATP gamma phosphate is transferred to the NDP beta phosphate via a ping-pong mechanism, using a phosphorylated active-site intermediate. The polypeptide is Nucleoside diphosphate kinase (Prochlorococcus marinus (strain SARG / CCMP1375 / SS120)).